We begin with the raw amino-acid sequence, 193 residues long: Holliday junction branch migration complex subunit RuvA (193 aa).

The tract at residues 1–64 (MIGRIAGTLL…EDAHLLYGFL (64 aa)) is domain I. Residues 65–139 (TPPERSTFRE…GKLGADLGPL (75 aa)) are domain II. The interval 139–143 (LAGAA) is flexible linker. Residues 144 to 193 (SPSDHATDILNALVALGYSEKEALAAIKNVPAGTGVSEGIKLSLKALSKA) are domain III.

This sequence belongs to the RuvA family. In terms of assembly, homotetramer. Forms an RuvA(8)-RuvB(12)-Holliday junction (HJ) complex. HJ DNA is sandwiched between 2 RuvA tetramers; dsDNA enters through RuvA and exits via RuvB. An RuvB hexamer assembles on each DNA strand where it exits the tetramer. Each RuvB hexamer is contacted by two RuvA subunits (via domain III) on 2 adjacent RuvB subunits; this complex drives branch migration. In the full resolvosome a probable DNA-RuvA(4)-RuvB(12)-RuvC(2) complex forms which resolves the HJ.

It localises to the cytoplasm. Functionally, the RuvA-RuvB-RuvC complex processes Holliday junction (HJ) DNA during genetic recombination and DNA repair, while the RuvA-RuvB complex plays an important role in the rescue of blocked DNA replication forks via replication fork reversal (RFR). RuvA specifically binds to HJ cruciform DNA, conferring on it an open structure. The RuvB hexamer acts as an ATP-dependent pump, pulling dsDNA into and through the RuvAB complex. HJ branch migration allows RuvC to scan DNA until it finds its consensus sequence, where it cleaves and resolves the cruciform DNA. The polypeptide is Holliday junction branch migration complex subunit RuvA (Burkholderia mallei (strain NCTC 10229)).